A 298-amino-acid chain; its full sequence is Lipoyl synthase (298 aa).

[4Fe-4S] cluster contacts are provided by Cys40, Cys45, Cys51, Cys67, Cys71, Cys74, and Ser280. One can recognise a Radical SAM core domain in the interval 53 to 269; it reads AVRKTATFMI…KEIALSKGFS (217 aa).

It belongs to the radical SAM superfamily. Lipoyl synthase family. The cofactor is [4Fe-4S] cluster.

It localises to the cytoplasm. It catalyses the reaction [[Fe-S] cluster scaffold protein carrying a second [4Fe-4S](2+) cluster] + N(6)-octanoyl-L-lysyl-[protein] + 2 oxidized [2Fe-2S]-[ferredoxin] + 2 S-adenosyl-L-methionine + 4 H(+) = [[Fe-S] cluster scaffold protein] + N(6)-[(R)-dihydrolipoyl]-L-lysyl-[protein] + 4 Fe(3+) + 2 hydrogen sulfide + 2 5'-deoxyadenosine + 2 L-methionine + 2 reduced [2Fe-2S]-[ferredoxin]. The protein operates within protein modification; protein lipoylation via endogenous pathway; protein N(6)-(lipoyl)lysine from octanoyl-[acyl-carrier-protein]. Functionally, catalyzes the radical-mediated insertion of two sulfur atoms into the C-6 and C-8 positions of the octanoyl moiety bound to the lipoyl domains of lipoate-dependent enzymes, thereby converting the octanoylated domains into lipoylated derivatives. This is Lipoyl synthase from Bacillus cereus (strain G9842).